Reading from the N-terminus, the 101-residue chain is Small ribosomal subunit protein uS14 (101 aa).

The protein belongs to the universal ribosomal protein uS14 family. Part of the 30S ribosomal subunit. Contacts proteins S3 and S10.

Functionally, binds 16S rRNA, required for the assembly of 30S particles and may also be responsible for determining the conformation of the 16S rRNA at the A site. This Synechococcus sp. (strain JA-3-3Ab) (Cyanobacteria bacterium Yellowstone A-Prime) protein is Small ribosomal subunit protein uS14.